Consider the following 741-residue polypeptide: NAD(P)H-quinone oxidoreductase subunit 5, chloroplastic (741 aa).

Helical transmembrane passes span 9 to 29 (WIIPFLPLPVPMLIGLGLLLF), 40 to 60 (WAFQSVLLLSIVMIFSMNLSI), 89 to 109 (IDPLTSIMSILITTVGIMVLI), 125 to 145 (FAYMSFFSTSMLGLVTSSNLI), 147 to 167 (IYIFWELVGMCSYLLIGFWFT), 185 to 205 (GDFGLLLGILGFYWITGSFEF), 219 to 239 (NEVNLLFVTLCAVLLFAGAIA), 258 to 278 (TPISALIHAATMVAAGIFLVA), 284 to 304 (FIVIPHIMNFISLIGIITVFF), 327 to 347 (LGYMMLALGMGSYRSALFHLI), 354 to 374 (ALLFLGSGSVIHSMETLVGYC), 396 to 416 (NSFLLGTLSLCGIPPLACFWS), 425 to 445 (WLYSPIFAIIAWSTAGLTAFY), 549 to 569 (LFPILIFIPFTLFVGFLGIPF), 605 to 625 (VFSVSIASFGIFIAFFLYKPV), and 721 to 741 (YLFFYFSYVSIFLLIYYFLNF).

Belongs to the complex I subunit 5 family. As to quaternary structure, NDH is composed of at least 16 different subunits, 5 of which are encoded in the nucleus.

It is found in the plastid. It localises to the chloroplast thylakoid membrane. The catalysed reaction is a plastoquinone + NADH + (n+1) H(+)(in) = a plastoquinol + NAD(+) + n H(+)(out). It catalyses the reaction a plastoquinone + NADPH + (n+1) H(+)(in) = a plastoquinol + NADP(+) + n H(+)(out). NDH shuttles electrons from NAD(P)H:plastoquinone, via FMN and iron-sulfur (Fe-S) centers, to quinones in the photosynthetic chain and possibly in a chloroplast respiratory chain. The immediate electron acceptor for the enzyme in this species is believed to be plastoquinone. Couples the redox reaction to proton translocation, and thus conserves the redox energy in a proton gradient. This Flaveria ramosissima (Yellowtops) protein is NAD(P)H-quinone oxidoreductase subunit 5, chloroplastic (ndhF).